The sequence spans 378 residues: Beta sliding clamp (378 aa).

It belongs to the beta sliding clamp family. In terms of assembly, forms a ring-shaped head-to-tail homodimer around DNA which binds and tethers DNA polymerases and other proteins to the DNA. The DNA replisome complex has a single clamp-loading complex (3 tau and 1 each of delta, delta', psi and chi subunits) which binds 3 Pol III cores (1 core on the leading strand and 2 on the lagging strand) each with a beta sliding clamp dimer. Additional proteins in the replisome are other copies of gamma, psi and chi, Ssb, DNA helicase and RNA primase.

The protein localises to the cytoplasm. Confers DNA tethering and processivity to DNA polymerases and other proteins. Acts as a clamp, forming a ring around DNA (a reaction catalyzed by the clamp-loading complex) which diffuses in an ATP-independent manner freely and bidirectionally along dsDNA. Initially characterized for its ability to contact the catalytic subunit of DNA polymerase III (Pol III), a complex, multichain enzyme responsible for most of the replicative synthesis in bacteria; Pol III exhibits 3'-5' exonuclease proofreading activity. The beta chain is required for initiation of replication as well as for processivity of DNA replication. The sequence is that of Beta sliding clamp (dnaN) from Streptococcus pneumoniae (strain ATCC BAA-255 / R6).